The sequence spans 354 residues: Protein-arginine kinase (354 aa).

The region spanning 24–254 (IVLSSRIRLA…QQIIQQEKMA (231 aa)) is the Phosphagen kinase C-terminal domain. ATP-binding positions include 27 to 31 (SSRIR), histidine 92, arginine 125, 176 to 180 (RASVM), and 207 to 212 (RGIYGE). Positions 337–342 (RDYRRA) match the RDXXRA motif of the pArg binding pocket involved in allosteric regulation motif.

Belongs to the ATP:guanido phosphotransferase family.

The enzyme catalyses L-arginyl-[protein] + ATP = N(omega)-phospho-L-arginyl-[protein] + ADP + H(+). With respect to regulation, appears to be allosterically activated by the binding of pArg-containing polypeptides to the pArg-binding pocket localized in the C-terminal domain of McsB. Its function is as follows. Catalyzes the specific phosphorylation of arginine residues in a large number of proteins. Is part of the bacterial stress response system. Protein arginine phosphorylation has a physiologically important role and is involved in the regulation of many critical cellular processes, such as protein homeostasis, motility, competence, and stringent and stress responses, by regulating gene expression and protein activity. This chain is Protein-arginine kinase, found in Bacillus cereus (strain G9842).